Here is a 413-residue protein sequence, read N- to C-terminus: Elongation factor 1-alpha (413 aa).

The tr-type G domain maps to 5–211 (KEHMNLAFIG…DDLEAPEKPV (207 aa)). The interval 14 to 21 (GHVDHGKS) is G1. A GTP-binding site is contributed by 14–21 (GHVDHGKS). Ser21 is a binding site for Mg(2+). A G2 region spans residues 60 to 64 (GVTID). Residues 81–84 (DCPG) are G3. GTP-binding positions include 81-85 (DCPGH) and 136-139 (NKMD). Positions 136 to 139 (NKMD) are G4. The tract at residues 175–177 (SAF) is G5.

This sequence belongs to the TRAFAC class translation factor GTPase superfamily. Classic translation factor GTPase family. EF-Tu/EF-1A subfamily.

It localises to the cytoplasm. The enzyme catalyses GTP + H2O = GDP + phosphate + H(+). Functionally, GTP hydrolase that promotes the GTP-dependent binding of aminoacyl-tRNA to the A-site of ribosomes during protein biosynthesis. The sequence is that of Elongation factor 1-alpha from Methanothermobacter thermautotrophicus (strain ATCC 29096 / DSM 1053 / JCM 10044 / NBRC 100330 / Delta H) (Methanobacterium thermoautotrophicum).